A 558-amino-acid polypeptide reads, in one-letter code: Podocalyxin (558 aa).

Residues 1 to 22 form the signal peptide; it reads MRCALALSALLLLLSTPPLLPS. The span at 20 to 29 shows a compositional bias: pro residues; the sequence is LPSSPSPSPS. 3 disordered regions span residues 20 to 50, 83 to 210, and 270 to 338; these read LPSS…PTPA, LGVS…DHLM, and SVIS…VAHE. Residues 23-461 lie on the Extracellular side of the membrane; it reads SPSPSPSPSQ…EEAEDRFSMP (439 aa). Polar residues-rich tracts occupy residues 32–50 and 83–107; these read QNAT…PTPA and LGVS…NTTV. N-linked (GlcNAc...) asparagine glycans are attached at residues N33, N43, and N104. A compositionally biased stretch (low complexity) spans 125–142; that stretch reads STKSADTTTVATSTATAK. 3 stretches are compositionally biased toward polar residues: residues 143–173, 190–204, and 270–302; these read PNTT…LTST, RQPT…PTSS, and SVIS…TSPA. N144 carries N-linked (GlcNAc...) asparagine glycosylation. Residues 313 to 324 are compositionally biased toward low complexity; it reads TMSSSPTAASTT. Residue N360 is glycosylated (N-linked (GlcNAc...) asparagine). A helical membrane pass occupies residues 462–482; sequence LIITIVCMASFLLLVAALYGC. Over 483–558 the chain is Cytoplasmic; the sequence is CHQRLSQRKD…DLDEEEDTHL (76 aa). The residue at position 518 (T518) is a Phosphothreonine. Phosphoserine occurs at positions 529 and 537. A Phosphothreonine modification is found at T556.

The protein belongs to the podocalyxin family. In terms of assembly, monomer; when associated with the membrane raft. Oligomer; when integrated in the apical membrane. Interacts (via the C-terminal PDZ-binding motif DTHL) with NHERF1 (via the PDZ domains); the interaction is not detected in glomerular epithelium cells, take place early in the secretory pathway and is necessary for its apical membrane sorting. Found in a complex with EZR, PODXL and NHERF2. Associates with the actin cytoskeleton through complex formation with EZR and NHERF2. Interacts (via the C-terminal PDZ-binding motif DTHL) with NHERF2 (via the PDZ 1 domain); interaction is detected in glomerular epithelium cells. Interacts with EZR. In terms of processing, N- and O-linked glycosylated. Sialoglycoprotein. Glomerular epithelium cell (podocyte).

The protein localises to the apical cell membrane. It is found in the cell projection. The protein resides in the lamellipodium. Its subcellular location is the filopodium. It localises to the ruffle. The protein localises to the microvillus. It is found in the membrane raft. The protein resides in the membrane. Involved in the regulation of both adhesion and cell morphology and cancer progression. Functions as an anti-adhesive molecule that maintains an open filtration pathway between neighboring foot processes in the podocyte by charge repulsion. Acts as a pro-adhesive molecule, enhancing the adherence of cells to immobilized ligands, increasing the rate of migration and cell-cell contacts in an integrin-dependent manner. Induces the formation of apical actin-dependent microvilli. Involved in the formation of a preapical plasma membrane subdomain to set up initial epithelial polarization and the apical lumen formation during renal tubulogenesis. Plays a role in cancer development and aggressiveness by inducing cell migration and invasion through its interaction with the actin-binding protein EZR. Affects EZR-dependent signaling events, leading to increased activities of the MAPK and PI3K pathways in cancer cells. In Homo sapiens (Human), this protein is Podocalyxin (PODXL).